Here is a 207-residue protein sequence, read N- to C-terminus: Large ribosomal subunit protein uL4 (207 aa).

Positions 44–77 (RRQGTHDTKTRSEVRGGGRKPWRQKGTGRARHGT) are disordered. Basic and acidic residues predominate over residues 47–59 (GTHDTKTRSEVRG). Residues 60–77 (GGRKPWRQKGTGRARHGT) are compositionally biased toward basic residues.

Belongs to the universal ribosomal protein uL4 family. Part of the 50S ribosomal subunit.

In terms of biological role, one of the primary rRNA binding proteins, this protein initially binds near the 5'-end of the 23S rRNA. It is important during the early stages of 50S assembly. It makes multiple contacts with different domains of the 23S rRNA in the assembled 50S subunit and ribosome. Forms part of the polypeptide exit tunnel. The protein is Large ribosomal subunit protein uL4 of Desulforudis audaxviator (strain MP104C).